A 207-amino-acid polypeptide reads, in one-letter code: Outer-membrane lipoprotein LolB (207 aa).

The N-terminal stretch at 1-21 (MPLPDFRLIRLLPLASLVLTA) is a signal peptide. The N-palmitoyl cysteine moiety is linked to residue C22. Residue C22 is the site of S-diacylglycerol cysteine attachment.

This sequence belongs to the LolB family. As to quaternary structure, monomer.

Its subcellular location is the cell outer membrane. In terms of biological role, plays a critical role in the incorporation of lipoproteins in the outer membrane after they are released by the LolA protein. The sequence is that of Outer-membrane lipoprotein LolB from Escherichia fergusonii (strain ATCC 35469 / DSM 13698 / CCUG 18766 / IAM 14443 / JCM 21226 / LMG 7866 / NBRC 102419 / NCTC 12128 / CDC 0568-73).